The chain runs to 52 residues: Conotoxin Cal6.3b (52 aa).

The propeptide occupies 1–4 (KKKR). Intrachain disulfides connect Cys-12–Cys-23, Cys-15–Cys-27, and Cys-22–Cys-30. At Gln-50 the chain carries Glutamine amide.

As to expression, expressed by the venom duct.

It localises to the secreted. Its function is as follows. Probable neurotoxin with unknown target. Possibly targets ion channels. The sequence is that of Conotoxin Cal6.3b from Californiconus californicus (California cone).